Reading from the N-terminus, the 90-residue chain is UPF0367 protein PMT9312_0127 (90 aa).

The protein belongs to the UPF0367 family.

The polypeptide is UPF0367 protein PMT9312_0127 (Prochlorococcus marinus (strain MIT 9312)).